A 461-amino-acid polypeptide reads, in one-letter code: tRNA modification GTPase MnmE (461 aa).

The (6S)-5-formyl-5,6,7,8-tetrahydrofolate site is built by Arg-23, Glu-88, and Arg-127. Residues 223 to 382 enclose the TrmE-type G domain; that stretch reads GLSTVIVGKP…IEDALAEMVY (160 aa). K(+) is bound at residue Asn-233. GTP contacts are provided by residues 233 to 238, 252 to 258, and 277 to 280; these read NVGKSS, TDVPGTT, and DTAG. Position 237 (Ser-237) interacts with Mg(2+). 3 residues coordinate K(+): Thr-252, Val-254, and Thr-257. Residue Thr-258 participates in Mg(2+) binding. (6S)-5-formyl-5,6,7,8-tetrahydrofolate is bound at residue Lys-461.

The protein belongs to the TRAFAC class TrmE-Era-EngA-EngB-Septin-like GTPase superfamily. TrmE GTPase family. In terms of assembly, homodimer. Heterotetramer of two MnmE and two MnmG subunits. K(+) is required as a cofactor.

Its subcellular location is the cytoplasm. Its function is as follows. Exhibits a very high intrinsic GTPase hydrolysis rate. Involved in the addition of a carboxymethylaminomethyl (cmnm) group at the wobble position (U34) of certain tRNAs, forming tRNA-cmnm(5)s(2)U34. This Alkaliphilus oremlandii (strain OhILAs) (Clostridium oremlandii (strain OhILAs)) protein is tRNA modification GTPase MnmE.